A 505-amino-acid chain; its full sequence is ATP synthase subunit alpha (505 aa).

Residue 170-177 (GDRQTGKT) coordinates ATP.

Belongs to the ATPase alpha/beta chains family. In terms of assembly, F-type ATPases have 2 components, CF(1) - the catalytic core - and CF(0) - the membrane proton channel. CF(1) has five subunits: alpha(3), beta(3), gamma(1), delta(1), epsilon(1). CF(0) has four main subunits: a(1), b(1), b'(1) and c(9-12).

The protein resides in the cellular thylakoid membrane. The enzyme catalyses ATP + H2O + 4 H(+)(in) = ADP + phosphate + 5 H(+)(out). Its function is as follows. Produces ATP from ADP in the presence of a proton gradient across the membrane. The alpha chain is a regulatory subunit. The chain is ATP synthase subunit alpha from Prochlorococcus marinus (strain MIT 9515).